We begin with the raw amino-acid sequence, 776 residues long: Mitochondrial intermediate peptidase (776 aa).

A mitochondrion-targeting transit peptide spans 1–28 (MFVRFYKRLDRQYIQSQRRWILSSNKCL). Residues 48 to 71 (DHWEESQAQNTSSEQDNKGKNSSY) are disordered. Positions 53–71 (SQAQNTSSEQDNKGKNSSY) are enriched in polar residues. His567 provides a ligand contact to Zn(2+). Glu568 is a catalytic residue. Zn(2+) is bound by residues His571 and His574.

This sequence belongs to the peptidase M3 family. Zn(2+) is required as a cofactor.

It localises to the mitochondrion matrix. The enzyme catalyses Release of an N-terminal octapeptide as second stage of processing of some proteins imported into the mitochondrion.. In terms of biological role, cleaves proteins, imported into the mitochondrion, to their mature size. While most mitochondrial precursor proteins are processed to the mature form in one step by mitochondrial processing peptidase (MPP), the sequential cleavage by MIP of an octapeptide after initial processing by MPP is a required step for a subgroup of nuclear-encoded precursor proteins destined for the matrix or the inner membrane. In Eremothecium gossypii (strain ATCC 10895 / CBS 109.51 / FGSC 9923 / NRRL Y-1056) (Yeast), this protein is Mitochondrial intermediate peptidase (OCT1).